The sequence spans 445 residues: UPF0210 protein SUB1511 (445 aa).

This sequence belongs to the UPF0210 family. In terms of assembly, homodimer.

This Streptococcus uberis (strain ATCC BAA-854 / 0140J) protein is UPF0210 protein SUB1511.